We begin with the raw amino-acid sequence, 356 residues long: GTPase Obg (356 aa).

In terms of domain architecture, Obg spans 1-159 (MKFLDEAKVY…RWIWLRMKLI (159 aa)). The OBG-type G domain maps to 160–327 (ADAGLVGLPN…ALRKLADVVG (168 aa)). Residues 166–173 (GLPNAGKS), 191–195 (FTTLH), 212–215 (DIPG), 279–282 (NKID), and 308–310 (SGA) contribute to the GTP site. Positions 173 and 193 each coordinate Mg(2+). The interval 327-356 (GEQPVSSKAKNAVESAATEEPWAAPVPPQG) is disordered.

Belongs to the TRAFAC class OBG-HflX-like GTPase superfamily. OBG GTPase family. As to quaternary structure, monomer. The cofactor is Mg(2+).

The protein resides in the cytoplasm. Its function is as follows. An essential GTPase which binds GTP, GDP and possibly (p)ppGpp with moderate affinity, with high nucleotide exchange rates and a fairly low GTP hydrolysis rate. Plays a role in control of the cell cycle, stress response, ribosome biogenesis and in those bacteria that undergo differentiation, in morphogenesis control. The polypeptide is GTPase Obg (Bradyrhizobium sp. (strain ORS 278)).